We begin with the raw amino-acid sequence, 98 residues long: Ferredoxin-like protein (98 aa).

This sequence to ferredoxins from P.putida and C.tartarivorum, ferredoxin I from A.vinelandii, ferredoxin II from D.desulfuricans.

Its function is as follows. Could be a 3Fe-4S cluster-containing protein. This chain is Ferredoxin-like protein (fixX), found in Rhizobium leguminosarum.